The primary structure comprises 142 residues: Small ribosomal subunit protein uS12 (142 aa).

Residues 1 to 30 (MGKTHGMGAARKLKSHRRTQRWADKSYKKS) are disordered. The span at 11–20 (RKLKSHRRTQ) shows a compositional bias: basic residues. Residues 21–30 (RWADKSYKKS) show a composition bias toward basic and acidic residues. The residue at position 61 (proline 61) is a Hydroxyproline.

This sequence belongs to the universal ribosomal protein uS12 family.

The chain is Small ribosomal subunit protein uS12 (RPS23) from Euphorbia esula (Leafy spurge).